A 100-amino-acid polypeptide reads, in one-letter code: Large ribosomal subunit protein uL23 (100 aa).

This sequence belongs to the universal ribosomal protein uL23 family. Part of the 50S ribosomal subunit. Contacts protein L29, and trigger factor when it is bound to the ribosome.

Its function is as follows. One of the early assembly proteins it binds 23S rRNA. One of the proteins that surrounds the polypeptide exit tunnel on the outside of the ribosome. Forms the main docking site for trigger factor binding to the ribosome. This Shewanella piezotolerans (strain WP3 / JCM 13877) protein is Large ribosomal subunit protein uL23.